The sequence spans 206 residues: Holliday junction branch migration complex subunit RuvA (206 aa).

The segment at 1–64 (MIAKLTGLLD…EDNIQLFGFA (64 aa)) is domain I. The tract at residues 65 to 143 (DTEERDWFRL…SFGAPAPAAA (79 aa)) is domain II. The flexible linker stretch occupies residues 144–154 (TAGKGGAAPAG). Positions 154–206 (GPAGAVADAVSALVNLGYRRVEAFTAVNAVAQRLGPEAGVSDLIRAGLKELSP) are domain III.

It belongs to the RuvA family. Homotetramer. Forms an RuvA(8)-RuvB(12)-Holliday junction (HJ) complex. HJ DNA is sandwiched between 2 RuvA tetramers; dsDNA enters through RuvA and exits via RuvB. An RuvB hexamer assembles on each DNA strand where it exits the tetramer. Each RuvB hexamer is contacted by two RuvA subunits (via domain III) on 2 adjacent RuvB subunits; this complex drives branch migration. In the full resolvosome a probable DNA-RuvA(4)-RuvB(12)-RuvC(2) complex forms which resolves the HJ.

It localises to the cytoplasm. Functionally, the RuvA-RuvB-RuvC complex processes Holliday junction (HJ) DNA during genetic recombination and DNA repair, while the RuvA-RuvB complex plays an important role in the rescue of blocked DNA replication forks via replication fork reversal (RFR). RuvA specifically binds to HJ cruciform DNA, conferring on it an open structure. The RuvB hexamer acts as an ATP-dependent pump, pulling dsDNA into and through the RuvAB complex. HJ branch migration allows RuvC to scan DNA until it finds its consensus sequence, where it cleaves and resolves the cruciform DNA. This is Holliday junction branch migration complex subunit RuvA from Rhodospirillum centenum (strain ATCC 51521 / SW).